The sequence spans 456 residues: MPPGPWESCFWVGGLILWLSVGSSGDAPPTPQPKCADFQSANLFEGTDLKVQFLLFVPSNPSCGQLVEGSSDLQNSGFNATLGTKLIIHGFRVLGTKPSWIDTFIRTLLRATNANVIAVDWIYGSTGVYFSAVKNVIKLSLEISLFLNKLLVLGVSESSIHIIGVSLGAHVGGMVGQLFGGQLGQITGLDPAGPEYTRASVEERLDAGDALFVEAIHTDTDNLGIRIPVGHVDYFVNGGQDQPGCPTFFYAGYSYLICDHMRAVHLYISALENSCPLMAFPCASYKAFLAGRCLDCFNPFLLSCPRIGLVEQGGVKIEPLPKEVKVYLLTTSSAPYCMHHSLVEFHLKELRNKDTNIEVTFLSSNITSSSKITIPKQQRYGKGIIAHATPQCQINQVKFKFQSSNRVWKKDRTTIIGKFCTALLPVNDREKMVCLPEPVNLQASVTVSCDLKIACV.

A signal peptide spans 1–25 (MPPGPWESCFWVGGLILWLSVGSSG). Residue asparagine 79 is glycosylated (N-linked (GlcNAc...) asparagine). Serine 166 acts as the Nucleophile in catalysis. The active-site Charge relay system is the aspartate 190. A disulfide bridge connects residues cysteine 245 and cysteine 258. Histidine 260 serves as the catalytic Charge relay system. 2 disulfide bridges follow: cysteine 282/cysteine 293 and cysteine 296/cysteine 304. Residue asparagine 365 is glycosylated (N-linked (GlcNAc...) asparagine). The interval 374–456 (IPKQQRYGKG…VSCDLKIACV (83 aa)) is involved in the recognition of diacyl-phospholipids.

The protein belongs to the AB hydrolase superfamily. Lipase family. Widely expressed. Expressed in placenta, prostate and liver. Weakly or not expressed in skin, leukocytes, platelets, colon, spleen, lung, muscle and kidney.

It localises to the secreted. The enzyme catalyses a 1,2-diacyl-sn-glycero-3-phospho-L-serine + H2O = a 2-acyl-sn-glycero-3-phospho-L-serine + a fatty acid + H(+). It carries out the reaction 1,2-di-(9Z)-octadecenoyl-sn-glycero-3-phospho-L-serine + H2O = 2-(9Z-octadecenoyl)-sn-glycero-3-phospho-L-serine + (9Z)-octadecenoate + H(+). It catalyses the reaction 1-hexadecanoyl-2-(5Z,8Z,11Z,14Z-eicosatetraenoyl)-sn-glycero-3-phospho-L-serine + H2O = 2-(5Z,8Z,11Z,14Z)-eicosatetraenoyl-sn-glycero-3-phospho-L-serine + hexadecanoate + H(+). The catalysed reaction is a 1-acyl-sn-glycero-3-phospho-L-serine + H2O = sn-glycero-3-phospho-L-serine + a fatty acid + H(+). The enzyme catalyses 1-(9Z-octadecenoyl)-sn-glycero-3-phospho-L-serine + H2O = sn-glycero-3-phospho-L-serine + (9Z)-octadecenoate + H(+). Hydrolyzes the ester bond of the acyl group attached at the sn-1 position of phosphatidylserines (phospholipase A1 activity) and 1-acyl-2-lysophosphatidylserines (lysophospholipase activity) in the pathway of phosphatidylserines acyl chain remodeling. Cleaves phosphatidylserines exposed on the outer leaflet of the plasma membrane of apoptotic cells producing 2-acyl-1-lysophosphatidylserines, which in turn enhance mast cell activation and histamine production. Has no activity toward other glycerophospholipids including phosphatidylcholines, phosphatidylethanolamines, phosphatidic acids or phosphatidylinositols, or glycerolipids such as triolein. In terms of biological role, hydrolyzes lyso-PS but not PS. This is Phospholipase A1 member A from Homo sapiens (Human).